Here is a 1080-residue protein sequence, read N- to C-terminus: DNA-directed RNA polymerase subunit beta (1080 aa).

Belongs to the RNA polymerase beta chain family. In terms of assembly, in plastids the minimal PEP RNA polymerase catalytic core is composed of four subunits: alpha, beta, beta', and beta''. When a (nuclear-encoded) sigma factor is associated with the core the holoenzyme is formed, which can initiate transcription.

The protein resides in the plastid. The protein localises to the chloroplast. The enzyme catalyses RNA(n) + a ribonucleoside 5'-triphosphate = RNA(n+1) + diphosphate. In terms of biological role, DNA-dependent RNA polymerase catalyzes the transcription of DNA into RNA using the four ribonucleoside triphosphates as substrates. The polypeptide is DNA-directed RNA polymerase subunit beta (Mesostigma viride (Green alga)).